The chain runs to 321 residues: Cytochrome c biogenesis protein CcsA (321 aa).

The next 8 membrane-spanning stretches (helical) occupy residues 17-37 (VVSI…FVGL), 48-68 (TFFC…HLPI), 71-91 (LYES…VPYF), 98-118 (LSTI…WGLL), 143-163 (MVSG…LLVI), 225-245 (ILSI…VWAN), 259-273 (TWAF…IYFH), and 286-306 (AIVA…VNLL).

It belongs to the CcmF/CycK/Ccl1/NrfE/CcsA family. In terms of assembly, may interact with Ccs1.

The protein resides in the plastid. It is found in the chloroplast thylakoid membrane. Its function is as follows. Required during biogenesis of c-type cytochromes (cytochrome c6 and cytochrome f) at the step of heme attachment. This Populus trichocarpa (Western balsam poplar) protein is Cytochrome c biogenesis protein CcsA.